A 288-amino-acid chain; its full sequence is Pteridine reductase 1 (288 aa).

Residue 17-40 (RLGRSIAEGLHAEGYAVCLHYHRS) coordinates NADP(+). Position 175 (Ser-175) interacts with substrate. The active-site Proton acceptor is Tyr-194.

Belongs to the short-chain dehydrogenases/reductases (SDR) family. In terms of assembly, homotetramer.

It catalyses the reaction (6R)-L-erythro-5,6,7,8-tetrahydrobiopterin + 2 NADP(+) = L-erythro-biopterin + 2 NADPH + 2 H(+). It functions in the pathway cofactor biosynthesis; tetrahydrobiopterin biosynthesis; tetrahydrobiopterin from biopterin: step 1/1. In terms of biological role, exhibits a NADPH-dependent biopterin reductase activity. Has good activity with folate and significant activity with dihydrofolate and dihydrobiopterin, but not with quinonoid dihydrobiopterin. Confers resistance to methotrexate (MTX). The polypeptide is Pteridine reductase 1 (PTR1) (Leishmania major).